The primary structure comprises 100 residues: Urease subunit gamma (100 aa).

The protein belongs to the urease gamma subunit family. Heterotrimer of UreA (gamma), UreB (beta) and UreC (alpha) subunits. Three heterotrimers associate to form the active enzyme.

The protein localises to the cytoplasm. The catalysed reaction is urea + 2 H2O + H(+) = hydrogencarbonate + 2 NH4(+). The protein operates within nitrogen metabolism; urea degradation; CO(2) and NH(3) from urea (urease route): step 1/1. This is Urease subunit gamma from Allorhizobium ampelinum (strain ATCC BAA-846 / DSM 112012 / S4) (Agrobacterium vitis (strain S4)).